A 494-amino-acid polypeptide reads, in one-letter code: Amidophosphoribosyltransferase (494 aa).

A propeptide spanning residues 1–10 is cleaved from the precursor; the sequence is MFNYSGLNEE. Catalysis depends on cysteine 11, which acts as the Nucleophile. The Glutamine amidotransferase type-2 domain maps to 11–231; it reads CGVFGIWNHP…AGEYVVINDK (221 aa). Mg(2+) is bound by residues serine 294, aspartate 356, and aspartate 357.

This sequence in the C-terminal section; belongs to the purine/pyrimidine phosphoribosyltransferase family. Mg(2+) is required as a cofactor.

It carries out the reaction 5-phospho-beta-D-ribosylamine + L-glutamate + diphosphate = 5-phospho-alpha-D-ribose 1-diphosphate + L-glutamine + H2O. Its pathway is purine metabolism; IMP biosynthesis via de novo pathway; N(1)-(5-phospho-D-ribosyl)glycinamide from 5-phospho-alpha-D-ribose 1-diphosphate: step 1/2. Its function is as follows. Catalyzes the formation of phosphoribosylamine from phosphoribosylpyrophosphate (PRPP) and glutamine. This is Amidophosphoribosyltransferase from Staphylococcus aureus (strain COL).